A 103-amino-acid polypeptide reads, in one-letter code: Large ribosomal subunit protein bL21 (103 aa).

It belongs to the bacterial ribosomal protein bL21 family. In terms of assembly, part of the 50S ribosomal subunit. Contacts protein L20.

Its function is as follows. This protein binds to 23S rRNA in the presence of protein L20. This Clostridium perfringens (strain ATCC 13124 / DSM 756 / JCM 1290 / NCIMB 6125 / NCTC 8237 / Type A) protein is Large ribosomal subunit protein bL21.